We begin with the raw amino-acid sequence, 969 residues long: Poly(ADP-ribose) glycohydrolase (969 aa).

3 disordered regions span residues 1–149 (MSAG…QQQT), 161–341 (HAEQ…CQAR), and 368–400 (NNAG…GKRD). Residues 1 to 449 (MSAGPGWEPC…LPPEKKWLGT (449 aa)) are A-domain. The Nuclear localization signal signature appears at 10-16 (CTKRPRW). Residues 69-84 (NATSFVFKQKTITTWM) show a composition bias toward polar residues. The short motif at 77 to 84 (QKTITTWM) is the PIP-box (PCNA interacting peptide) element. The span at 87 to 100 (KGPKTAESESKENN) shows a compositional bias: basic and acidic residues. A compositionally biased stretch (polar residues) spans 101–113 (NTRIDSMMSSVQK). The span at 116-125 (FYPHKVEKLE) shows a compositional bias: basic and acidic residues. Polar residues-rich tracts occupy residues 128–149 (PQLN…QQQT) and 179–189 (QLSNANIGQSP). Phosphoserine is present on Ser-135. Position 137 is a phosphothreonine (Thr-137). The span at 190–205 (HTDDHSDTDHEEDRDN) shows a compositional bias: basic and acidic residues. Ser-195 is subject to Phosphoserine. Position 197 is a phosphothreonine (Thr-197). The segment covering 226–237 (ARSNCKCSGSRQ) has biased composition (polar residues). Residues Ser-256, Ser-259, Ser-281, Ser-286, Ser-293, Ser-297, and Ser-311 each carry the phosphoserine modification. The segment covering 275 to 284 (KLTGQESSLG) has biased composition (polar residues). The span at 311-325 (SEADEETSPVFDEQD) shows a compositional bias: acidic residues. 2 stretches are compositionally biased toward polar residues: residues 329–339 (SQTANKLSSCQ) and 369–387 (NAGT…SSLN). An N6-acetyllysine modification is found at Lys-334. The interval 603–788 (QPIPLLKQKM…TEQYSEYTGY (186 aa)) is catalytic. Residue 719–720 (IE) participates in substrate binding. Asp-730 is an active-site residue. Substrate-binding residues include Asn-733 and Gln-747. Catalysis depends on residues Glu-748 and Glu-749. Residues Tyr-788 and 862-867 (NWGCGA) each bind substrate.

It belongs to the poly(ADP-ribose) glycohydrolase family. As to quaternary structure, interacts with PCNA. Interacts with NUDT5.

The protein resides in the nucleus. The enzyme catalyses [(1''-&gt;2')-ADP-alpha-D-ribose](n) + H2O = [(1''-&gt;2')-ADP-alpha-D-ribose](n-1) + ADP-D-ribose. Functionally, poly(ADP-ribose) glycohydrolase that degrades poly(ADP-ribose) by hydrolyzing the ribose-ribose bonds present in poly(ADP-ribose). PARG acts both as an endo- and exoglycosidase, releasing poly(ADP-ribose) of different length as well as ADP-ribose monomers. It is however unable to cleave the ester bond between the terminal ADP-ribose and ADP-ribosylated residues, leaving proteins that are mono-ADP-ribosylated. Poly(ADP-ribose) is synthesized after DNA damage is only present transiently and is rapidly degraded by PARG. Required to prevent detrimental accumulation of poly(ADP-ribose) upon prolonged replicative stress, while it is not required for recovery from transient replicative stress. Responsible for the prevalence of mono-ADP-ribosylated proteins in cells, thanks to its ability to degrade poly(ADP-ribose) without cleaving the terminal protein-ribose bond. Required for retinoid acid-dependent gene transactivation, probably by removing poly(ADP-ribose) from histone demethylase KDM4D, allowing chromatin derepression at RAR-dependent gene promoters. Involved in the synthesis of ATP in the nucleus, together with PARP1, NMNAT1 and NUDT5. Nuclear ATP generation is required for extensive chromatin remodeling events that are energy-consuming. This chain is Poly(ADP-ribose) glycohydrolase, found in Mus musculus (Mouse).